We begin with the raw amino-acid sequence, 406 residues long: Kelch domain-containing protein 1 (406 aa).

Kelch repeat units follow at residues 24–76, 80–134, 135–181, 208–258, 260–307, and 311–361; these read FLYV…CGAC, RLYV…VYKD, RLIY…TKTR, KGYV…AITD, KLFL…ACLG, and EIMV…LKSQ.

Component of a CRL5 E3 ubiquitin-protein ligase complex, also named ECS (Elongin BC-CUL2/5-SOCS-box protein) complex, composed of CUL5, Elongin BC (ELOB and ELOC), RBX1 and substrate-specific adapter KLHDC1.

Its subcellular location is the cytoplasm. It localises to the cytosol. The protein operates within protein modification; protein ubiquitination. Substrate-recognition component of a Cul5-RING (CRL5) E3 ubiquitin-protein ligase complex of the DesCEND (destruction via C-end degrons) pathway, which recognizes a C-degron located at the extreme C terminus of target proteins, leading to their ubiquitination and degradation. The C-degron recognized by the DesCEND pathway is usually a motif of less than ten residues and can be present in full-length proteins, truncated proteins or proteolytically cleaved forms. The CRL5(KLHDC1) complex mediates ubiquitination and degradation of truncated SELENOS selenoprotein produced by failed UGA/Sec decoding, which ends with a glycine. This Mus musculus (Mouse) protein is Kelch domain-containing protein 1.